Consider the following 122-residue polypeptide: Large ribosomal subunit protein uL14 (122 aa).

The protein belongs to the universal ribosomal protein uL14 family. As to quaternary structure, part of the 50S ribosomal subunit. Forms a cluster with proteins L3 and L19. In the 70S ribosome, L14 and L19 interact and together make contacts with the 16S rRNA in bridges B5 and B8.

Binds to 23S rRNA. Forms part of two intersubunit bridges in the 70S ribosome. This is Large ribosomal subunit protein uL14 from Erythrobacter litoralis (strain HTCC2594).